The sequence spans 366 residues: Prostaglandin F2-alpha receptor (366 aa).

The Extracellular segment spans residues 1-31; the sequence is MSINSSKQPASSAAGLIANTTCQTENRLSVF. Asn4 and Asn19 each carry an N-linked (GlcNAc...) asparagine glycan. A helical transmembrane segment spans residues 32-55; the sequence is FSIIFMTVGIVSNSLAIAILMKAY. Over 56-69 the chain is Cytoplasmic; that stretch reads QRFRRKSKASFLLL. The chain crosses the membrane as a helical span at residues 70–90; the sequence is ASGLVITDFFGHLINGGIAVF. The Extracellular segment spans residues 91 to 109; it reads VYASDKDWIRFDQSNILCS. A disulfide bridge connects residues Cys108 and Cys186. The chain crosses the membrane as a helical span at residues 110–131; sequence VFGISMVFSGLCPLFLGSTMAI. The Cytoplasmic segment spans residues 132–152; the sequence is ERCIGVTNPLFHSTKITSKHV. Residues 153-175 traverse the membrane as a helical segment; it reads KMILSGVCMFAVFVALLPILGHR. Over 176–198 the chain is Extracellular; that stretch reads DYQIQASRTWCFYNTEHIEDWED. A helical membrane pass occupies residues 199–224; sequence RFYLLFFSSLGLLALGISFSCNAVTG. Residues 225–250 lie on the Cytoplasmic side of the membrane; it reads VTLLRVKFRSQQHRQGRSHHLEMVIQ. The helical transmembrane segment at 251-267 threads the bilayer; that stretch reads LLAIMCVSCVCWSPFLV. Over 268-285 the chain is Extracellular; it reads TMANIAINGNNSPVTCET. Residues 286–307 form a helical membrane-spanning segment; it reads TLFALRMATWNQILDPWVYILL. The Cytoplasmic portion of the chain corresponds to 308 to 366; that stretch reads RKAVLRNLYKLASRCCGVNIISLHIWELSSIKNSLKVAAISESPAAEKENQQASSEAGL.

The protein belongs to the G-protein coupled receptor 1 family. In terms of tissue distribution, highest expression in pregnant ovary. Also found in a low extent in the kidney. In the brain, expressed in astrocytes and oligodendrocytes, and meningeal fibroblasts, but not in migroglia cells.

It is found in the cell membrane. Its function is as follows. Receptor for prostaglandin F2-alpha (PGF2-alpha). The activity of this receptor is mediated by G proteins which activate a phosphatidylinositol-calcium second messenger system. Initiates luteolysis in the corpus luteum. This Rattus norvegicus (Rat) protein is Prostaglandin F2-alpha receptor (Ptgfr).